A 659-amino-acid chain; its full sequence is Delta(6)-protoilludene synthase (659 aa).

Mg(2+)-binding residues include aspartate 91, asparagine 227, serine 231, and glutamate 235. A DDXXD motif motif is present at residues aspartate 91–aspartate 95. Residues arginine 316 and tyrosine 317 each coordinate (2E,6E)-farnesyl diphosphate. Positions proline 528–serine 586 are disordered. Positions phenylalanine 530–arginine 573 are enriched in polar residues. The segment covering serine 574–serine 586 has biased composition (low complexity).

This sequence belongs to the terpene synthase family. It depends on Mg(2+) as a cofactor.

The enzyme catalyses (2E,6E)-farnesyl diphosphate = Delta(6)-protoilludene + diphosphate. Terpene cyclase that catalyzes the cyclization of farnesyl diphosphate (FPP) to delta(6)-protoilludene. The polypeptide is Delta(6)-protoilludene synthase (Cyclocybe aegerita (Black poplar mushroom)).